The sequence spans 191 residues: Ankyrin repeat domain-containing protein 22 (191 aa).

ANK repeat units follow at residues 39 to 68 (NGDT…NVNL), 72 to 100 (KERT…MPVL), 101 to 130 (LIGY…EVNA), and 134 to 163 (YGCT…DPTI).

The protein is Ankyrin repeat domain-containing protein 22 (ANKRD22) of Homo sapiens (Human).